We begin with the raw amino-acid sequence, 240 residues long: Small ribosomal subunit protein uS2c (240 aa).

The protein belongs to the universal ribosomal protein uS2 family.

The protein localises to the plastid. It localises to the chloroplast. The sequence is that of Small ribosomal subunit protein uS2c (rps2) from Euglena gracilis.